We begin with the raw amino-acid sequence, 133 residues long: Putative actin-depolymerizing factor 11 (133 aa).

The 133-residue stretch at 1–133 folds into the ADF-H domain; it reads MVLHDDCKLT…SLDAIRRRIN (133 aa).

This sequence belongs to the actin-binding proteins ADF family.

The protein localises to the cytoplasm. It localises to the cytoskeleton. Functionally, actin-depolymerizing protein. Severs actin filaments (F-actin) and binds to actin monomers. This Arabidopsis thaliana (Mouse-ear cress) protein is Putative actin-depolymerizing factor 11 (ADF11).